Consider the following 507-residue polypeptide: Efflux pump ustT (507 aa).

11 helical membrane passes run 59–79 (IAVV…IIVA), 146–166 (LLIA…VTWF), 180–200 (IWQL…AMIA), 216–236 (HAAV…LANF), 240–260 (IPVF…YVVV), 316–336 (VLLI…SGIT), 359–379 (AGVN…ILVK), 398–418 (VCLI…TLVF), 421–441 (TVFA…TGMV), 449–469 (VFTG…PMLA), and 481–501 (IWVG…LGAI).

It belongs to the major facilitator superfamily.

It localises to the cell membrane. The protein operates within mycotoxin biosynthesis. In terms of biological role, efflux pump; part of the gene cluster that mediates the biosynthesis of the secondary metabolite ustiloxin B, an antimitotic tetrapeptide. Probably involved in self-resistance through the export of ustiloxin B. This is Efflux pump ustT from Aspergillus flavus (strain ATCC 200026 / FGSC A1120 / IAM 13836 / NRRL 3357 / JCM 12722 / SRRC 167).